Here is a 513-residue protein sequence, read N- to C-terminus: ATP synthase subunit alpha 2 (513 aa).

169–176 (GDRQVGKT) is a binding site for ATP.

The protein belongs to the ATPase alpha/beta chains family. As to quaternary structure, F-type ATPases have 2 components, CF(1) - the catalytic core - and CF(0) - the membrane proton channel. CF(1) has five subunits: alpha(3), beta(3), gamma(1), delta(1), epsilon(1). CF(0) has three main subunits: a(1), b(2) and c(9-12). The alpha and beta chains form an alternating ring which encloses part of the gamma chain. CF(1) is attached to CF(0) by a central stalk formed by the gamma and epsilon chains, while a peripheral stalk is formed by the delta and b chains.

The protein localises to the cell inner membrane. It catalyses the reaction ATP + H2O + 4 H(+)(in) = ADP + phosphate + 5 H(+)(out). Produces ATP from ADP in the presence of a proton gradient across the membrane. The alpha chain is a regulatory subunit. The protein is ATP synthase subunit alpha 2 of Psychromonas ingrahamii (strain DSM 17664 / CCUG 51855 / 37).